Reading from the N-terminus, the 547-residue chain is Glucose-6-phosphate isomerase (547 aa).

Glutamate 356 acts as the Proton donor in catalysis. Catalysis depends on residues histidine 387 and lysine 508.

Belongs to the GPI family.

The protein localises to the cytoplasm. The enzyme catalyses alpha-D-glucose 6-phosphate = beta-D-fructose 6-phosphate. Its pathway is carbohydrate biosynthesis; gluconeogenesis. It functions in the pathway carbohydrate degradation; glycolysis; D-glyceraldehyde 3-phosphate and glycerone phosphate from D-glucose: step 2/4. Its function is as follows. Catalyzes the reversible isomerization of glucose-6-phosphate to fructose-6-phosphate. The polypeptide is Glucose-6-phosphate isomerase (Cupriavidus taiwanensis (strain DSM 17343 / BCRC 17206 / CCUG 44338 / CIP 107171 / LMG 19424 / R1) (Ralstonia taiwanensis (strain LMG 19424))).